Consider the following 53-residue polypeptide: Natriuretic peptide DNP-2 (53 aa).

Cysteine 7 and cysteine 23 are joined by a disulfide. A propeptide spanning residues isoleucine 39–alanine 53 is cleaved from the precursor.

It belongs to the natriuretic peptide family. As to expression, expressed by the venom gland.

Its subcellular location is the secreted. Exhibits vasodilator, natriuretic and diuretic properties in animal models and human tissues. Acts by stimulating cGMP via the natriuretic peptide receptor 1 (NPR1). Is a poor agonist of the atrial natriuretic peptide receptor 2 (NPR2). Is not degraded by neutral endopeptidase (NEP/MME). Binds to atrial natriuretic peptide clearance receptor (NPR-C/NPR3), which may be responsible of the removal of DNP from the circulation. Increases calcium uptake and induces histamine release from rat peritoneal mast cells. Increases calcium-activated potassium (KCa) current in gastric antral circular smooth muscle cells by increasing cGMP production and activating inositol trisphosphate receptors (IP3Rs). In vivo, reduces both systolic and diastolic blood pressure with no effect on heart rate, when intravenously injected in conscious rabbits. The protein is Natriuretic peptide DNP-2 of Dendroaspis angusticeps (Eastern green mamba).